Consider the following 658-residue polypeptide: MSKFLDMLSGSQCVSLEKCGDVVVSTNDCMIALYCHFCRDLFTQLPEFLRHLQSNHSDVLHFTKEHNVYSVEELLSGEQDKAHEDAQSAGHNSSSGDSRSLMNSEDSRAIDGSEENSDNSPVKPEQIGKQNEINLLAEVTNILLQTNDKEERINDELKPESGEFKGARKKANNESSSLKICDLKSHTIARTSRKRMSLVKNHILRVFDRDLIAKLEMKPLEPDSKLPITEPIQEDNIPGTCFQTPPKPIPSLSQLSVRKSSLTEANHICTKYDTKKTAPTMPKLLNNVPKSILTSQQAQVNSDSSEINETYHISEAASQVTKTTKSFPVQINQIEILQPLKLPKTLITPINEEGVSDQMENSTKNINNAQSLLKENPKKFLKKPSELEIKTKGGPNKFLNVIKSKADPIIVKRVQTTSAKDSTNKIQIRSNDKTKGFASEFNSTKIRKLKMENCVDLKTEDPCDNTNMRLNKMATIGSCEILKAVGLPAITDNAIEAIMLLPDELETMRIRADQFTKIYKKYYSIWNYRKIFPPAKPDFISQKIFALTREVNKTMLCNLANSDIKGIINQISVWHYNIYTQYIELDNISEIARYTLKLFSFLPVSFAYFCKWCDDIFILKKEYLKHLISHQVRFQCTKCIKVFKYKGYYEKHLRNAHP.

A C2H2-type 1 zinc finger spans residues 33–56 (LYCHFCRDLFTQLPEFLRHLQSNH). The interval 80–131 (DKAHEDAQSAGHNSSSGDSRSLMNSEDSRAIDGSEENSDNSPVKPEQIGKQN) is disordered. Positions 89-104 (AGHNSSSGDSRSLMNS) are enriched in polar residues. C2H2-type zinc fingers lie at residues 608 to 630 (YFCK…LISH) and 634 to 657 (FQCT…RNAH).

The protein belongs to the Teflon family.

Its subcellular location is the nucleus. It localises to the chromosome. Functionally, specifically required in males for proper segregation of autosomal bivalents at meiosis I. Expression is required in the male germ line prior to spermatocyte stage S4. May have a role as a bridging molecule maintaining adhesion to hold autosome bivalents together via heterochromatic connections. This is Protein teflon from Drosophila simulans (Fruit fly).